The chain runs to 122 residues: Large ribosomal subunit protein bL12 (122 aa).

It belongs to the bacterial ribosomal protein bL12 family. As to quaternary structure, homodimer. Part of the 50S ribosomal subunit; present in 4 copies per ribosome. Forms part of the ribosomal stalk which helps the ribosome interact with GTP-bound translation factors. Forms a pentameric L10(L12)2(L12)2 complex, where L10 forms an elongated spine to which 2 L12 dimers bind in a sequential fashion.

In terms of biological role, forms part of the ribosomal stalk which helps the ribosome interact with GTP-bound translation factors. Is thus essential for accurate translation. This Geobacillus stearothermophilus (Bacillus stearothermophilus) protein is Large ribosomal subunit protein bL12.